The following is a 224-amino-acid chain: Cytidylate kinase (224 aa).

11–19 (GPAAAGKST) contacts ATP.

It belongs to the cytidylate kinase family. Type 1 subfamily.

Its subcellular location is the cytoplasm. The enzyme catalyses CMP + ATP = CDP + ADP. It carries out the reaction dCMP + ATP = dCDP + ADP. The protein is Cytidylate kinase of Listeria monocytogenes serotype 4a (strain HCC23).